The chain runs to 396 residues: Ribosomal RNA large subunit methyltransferase I (396 aa).

A PUA domain is found at 2–81 (SVRLVLAKGR…ESIDIAFFTR (80 aa)).

It belongs to the methyltransferase superfamily. RlmI family.

The protein localises to the cytoplasm. The enzyme catalyses cytidine(1962) in 23S rRNA + S-adenosyl-L-methionine = 5-methylcytidine(1962) in 23S rRNA + S-adenosyl-L-homocysteine + H(+). Functionally, specifically methylates the cytosine at position 1962 (m5C1962) of 23S rRNA. The protein is Ribosomal RNA large subunit methyltransferase I of Escherichia coli (strain SMS-3-5 / SECEC).